Here is a 213-residue protein sequence, read N- to C-terminus: Protein-L-isoaspartate O-methyltransferase (213 aa).

Residue S64 is part of the active site.

This sequence belongs to the methyltransferase superfamily. L-isoaspartyl/D-aspartyl protein methyltransferase family.

Its subcellular location is the cytoplasm. It carries out the reaction [protein]-L-isoaspartate + S-adenosyl-L-methionine = [protein]-L-isoaspartate alpha-methyl ester + S-adenosyl-L-homocysteine. Catalyzes the methyl esterification of L-isoaspartyl residues in peptides and proteins that result from spontaneous decomposition of normal L-aspartyl and L-asparaginyl residues. It plays a role in the repair and/or degradation of damaged proteins. The chain is Protein-L-isoaspartate O-methyltransferase from Flavobacterium johnsoniae (strain ATCC 17061 / DSM 2064 / JCM 8514 / BCRC 14874 / CCUG 350202 / NBRC 14942 / NCIMB 11054 / UW101) (Cytophaga johnsonae).